A 512-amino-acid polypeptide reads, in one-letter code: 2-isopropylmalate synthase (512 aa).

In terms of domain architecture, Pyruvate carboxyltransferase spans 5 to 268 (LIIFDTTLRD…DVGIDTQHIV (264 aa)). Mn(2+)-binding residues include Asp14, His202, His204, and Asn239. The tract at residues 394–512 (GFVSLAQHSE…SKAERVAAQG (119 aa)) is regulatory domain.

It belongs to the alpha-IPM synthase/homocitrate synthase family. LeuA type 1 subfamily. Homodimer. Mn(2+) serves as cofactor.

It localises to the cytoplasm. The catalysed reaction is 3-methyl-2-oxobutanoate + acetyl-CoA + H2O = (2S)-2-isopropylmalate + CoA + H(+). It participates in amino-acid biosynthesis; L-leucine biosynthesis; L-leucine from 3-methyl-2-oxobutanoate: step 1/4. Functionally, catalyzes the condensation of the acetyl group of acetyl-CoA with 3-methyl-2-oxobutanoate (2-ketoisovalerate) to form 3-carboxy-3-hydroxy-4-methylpentanoate (2-isopropylmalate). In Acidovorax ebreus (strain TPSY) (Diaphorobacter sp. (strain TPSY)), this protein is 2-isopropylmalate synthase.